A 177-amino-acid polypeptide reads, in one-letter code: Large ribosomal subunit protein uL6 (177 aa).

A compositionally biased stretch (basic and acidic residues) spans 152–171; that stretch reads RPPEPYKGKGVRYDDEEVRR. Positions 152 to 177 are disordered; it reads RPPEPYKGKGVRYDDEEVRRKEAKKK.

It belongs to the universal ribosomal protein uL6 family. In terms of assembly, part of the 50S ribosomal subunit.

Functionally, this protein binds to the 23S rRNA, and is important in its secondary structure. It is located near the subunit interface in the base of the L7/L12 stalk, and near the tRNA binding site of the peptidyltransferase center. This is Large ribosomal subunit protein uL6 from Shewanella sp. (strain MR-4).